The sequence spans 494 residues: Argininosuccinate lyase (494 aa).

It belongs to the lyase 1 family. Argininosuccinate lyase subfamily.

Its subcellular location is the cytoplasm. The enzyme catalyses 2-(N(omega)-L-arginino)succinate = fumarate + L-arginine. The protein operates within amino-acid biosynthesis; L-arginine biosynthesis; L-arginine from L-ornithine and carbamoyl phosphate: step 3/3. The sequence is that of Argininosuccinate lyase from Methanosphaerula palustris (strain ATCC BAA-1556 / DSM 19958 / E1-9c).